The following is a 38-amino-acid chain: Large ribosomal subunit protein bL36B (38 aa).

Belongs to the bacterial ribosomal protein bL36 family.

This chain is Large ribosomal subunit protein bL36B, found in Prochlorococcus marinus (strain MIT 9515).